An 892-amino-acid polypeptide reads, in one-letter code: Zinc finger protein 512B (892 aa).

A disordered region spans residues 1–82 (MTDPFCVGGR…KKGRPKAENQ (82 aa)). The span at 8 to 19 (GGRRLPGSSKSG) shows a compositional bias: low complexity. The C2H2-type 1; atypical zinc finger occupies 105–129 (VKCPNSGCWLEFPSIYGLKYHYQRC). The C2H2-type 2 zinc-finger motif lies at 140 to 163 (FPCPFCEAAFTSKTQLEKHRIWNH). 2 disordered regions span residues 323–473 (MVLL…RKKV) and 562–582 (EHSA…EERE). Over residues 371–384 (SMGQSSAFQLSADT) the composition is skewed to polar residues. A compositionally biased stretch (low complexity) spans 385–398 (SSGSLSPGSRPSGG). Ser409 carries the post-translational modification Phosphoserine. The segment covering 418 to 428 (TKHRRKQKTPK) has biased composition (basic residues). The short motif at 421–427 (RRKQKTP) is the NuRD interaction motif element. The segment at 540 to 563 (LKCQHCRKQFKSKAGLNYHTMAEH) adopts a C2H2-type 3 zinc-finger fold. A C2H2-type 4; atypical zinc finger spans residues 594–618 (LRCPQEGCGAAFSSLMGYQYHQRRC). The segment at 630-653 (FPCTHCGKTYRSKAGHDYHVRSEH) adopts a C2H2-type 5 zinc-finger fold. The segment at 649–682 (VRSEHTAPPPEEPTDKSPEAEDPLGVERTPSGRV) is disordered. At Ser686 the chain carries Phosphoserine. Residues 750–774 (VNCPNDCCEAIYSSVSGLKAHLASC) form a C2H2-type 6; atypical zinc finger. Residues 784 to 807 (YRCLLCPKEFSSESGVKYHILKTH) form a C2H2-type 7 zinc finger. The tract at residues 812-892 (FRTSADPPPK…KVGVSKAPEK (81 aa)) is disordered. The segment covering 819–831 (PPKHRSQDSLVPK) has biased composition (basic and acidic residues). A compositionally biased stretch (basic residues) spans 832–849 (KEKKKNLAGGKKRGRKPK). A compositionally biased stretch (basic and acidic residues) spans 850–876 (ERTPEEPVAKLPPRRDDWPPGCRDKGA).

The protein belongs to the krueppel C2H2-type zinc-finger protein family. Interacts (via its NuRD interaction motif) with RBBP4 of the nucleosome remodeling and deacetylase (NuRD) complex; the interaction is direct and may play a role in repressing gene expression.

Its subcellular location is the nucleus. Functionally, involved in transcriptional regulation by repressing gene expression. Associates with the nucleosome remodeling and histone deacetylase (NuRD) complex, which promotes transcriptional repression by histone deacetylation and nucleosome remodeling. The chain is Zinc finger protein 512B (ZNF512B) from Homo sapiens (Human).